The chain runs to 264 residues: Ribonuclease H (264 aa).

Residues 55 to 88 (GSRYSSSSGPYRRSTTSYGYSPYSSSSSNYSARH) are disordered. Over residues 56-85 (SRYSSSSGPYRRSTTSYGYSPYSSSSSNYS) the composition is skewed to low complexity. The residue at position 97 (Ser97) is a Phosphoserine. The RNase H type-1 domain occupies 120-263 (CSDRQVVYAD…ADMLARRGAS (144 aa)). The Mg(2+) site is built by Asp129, Glu171, Asp191, and Asp255.

The protein belongs to the RNase H family. The cofactor is Mg(2+).

The catalysed reaction is Endonucleolytic cleavage to 5'-phosphomonoester.. Its function is as follows. Endonuclease that specifically degrades the RNA of RNA-DNA hybrids. This is Ribonuclease H (rnh1) from Schizosaccharomyces pombe (strain 972 / ATCC 24843) (Fission yeast).